Reading from the N-terminus, the 221-residue chain is Small ribosomal subunit protein uS5 (221 aa).

The 64-residue stretch at 46 to 109 (LKDEVIDIKR…INAKLNIMEI (64 aa)) folds into the S5 DRBM domain.

This sequence belongs to the universal ribosomal protein uS5 family. Part of the 30S ribosomal subunit. Contacts protein S4.

Its function is as follows. With S4 and S12 plays an important role in translational accuracy. The chain is Small ribosomal subunit protein uS5 from Thermoplasma acidophilum (strain ATCC 25905 / DSM 1728 / JCM 9062 / NBRC 15155 / AMRC-C165).